Here is a 144-residue protein sequence, read N- to C-terminus: Large ribosomal subunit protein uL15 (144 aa).

The segment at Met1–Gly53 is disordered. Positions Arg21–Gly31 are enriched in gly residues.

Belongs to the universal ribosomal protein uL15 family. As to quaternary structure, part of the 50S ribosomal subunit.

Its function is as follows. Binds to the 23S rRNA. The chain is Large ribosomal subunit protein uL15 from Hamiltonella defensa subsp. Acyrthosiphon pisum (strain 5AT).